The primary structure comprises 154 residues: Transcription antitermination protein NusB (154 aa).

Belongs to the NusB family.

In terms of biological role, involved in transcription antitermination. Required for transcription of ribosomal RNA (rRNA) genes. Binds specifically to the boxA antiterminator sequence of the ribosomal RNA (rrn) operons. The polypeptide is Transcription antitermination protein NusB (Methylobacillus flagellatus (strain ATCC 51484 / DSM 6875 / VKM B-1610 / KT)).